Reading from the N-terminus, the 78-residue chain is Conotoxin TsMSGL-11 (78 aa).

An N-terminal signal peptide occupies residues 1–24; the sequence is MSGLGIMVLTLLLLVFMATSHQDA. The propeptide occupies 25 to 44; sequence GEKQATQRDAINVRRRRSIT. Disulfide bonds link C51–C63, C55–C72, and C62–C76. Residue F77 is modified to Phenylalanine amide.

Belongs to the conotoxin O3 superfamily. As to expression, expressed by the venom duct.

Its subcellular location is the secreted. The chain is Conotoxin TsMSGL-11 from Conus tessulatus (Tessellate cone).